The chain runs to 437 residues: GTPase Der (437 aa).

EngA-type G domains follow at residues Pro3–Glu168 and Ile178–Ser353. GTP contacts are provided by residues Gly9 to Ser16, Asp56 to Tyr60, Asn120 to Glu123, Gly184 to Ser191, Asp231 to Leu235, and Asn296 to Asp299. A KH-like domain is found at Arg354–Lys437.

Belongs to the TRAFAC class TrmE-Era-EngA-EngB-Septin-like GTPase superfamily. EngA (Der) GTPase family. Associates with the 50S ribosomal subunit.

Its function is as follows. GTPase that plays an essential role in the late steps of ribosome biogenesis. This Pelodictyon phaeoclathratiforme (strain DSM 5477 / BU-1) protein is GTPase Der.